The sequence spans 548 residues: MSNKPFHYQAPFPLKKDDTEYYLLTSEHVSVSEFEGQEILKVAPEALTLLARQAFHDASFMLRPAHQQQVADILRDPEASENDKYVALQFLRNSDIAAKGVLPTCQDTGTAIIVGKKGQRVWTGGGDEAALARGVYNTYIEDNLRYSQNAPLDMYKEVNTGTNLPAQIDLYAVDGDEYKFLCIAKGGGSANKTYLYQETKALLTPGKLKNYLVEKMRTLGTAACPPYHIAFVIGGTSAETNLKTVKLASAKYYDELPTEGNEHGQAFRDVELEKELLIEAQNLGLGAQFGGKYFAHDIRVIRLPRHGASCPVGMGVSCSADRNIKAKINRQGIWIEKLEHNPGKYIPEELRKAGEGEAVRVDLNRPMKEILAQLSQYPVSTRLSLNGTIIVGRDIAHAKLKERMDNGEGLPQYIKDHPIYYAGPAKTPEGYASGSLGPTTAGRMDSYVDQLQAQGGSMIMLAKGNRSQQVTDACKKHGGFYLGSIGGPAAVLAQGSIKSLECVEYPELGMEAIWKIEVEDFPAFILVDDKGNDFFQQIQLTQCTRCVK.

[4Fe-4S] cluster-binding residues include C105, C224, and C318.

It belongs to the class-I fumarase family. In terms of assembly, homodimer. It depends on [4Fe-4S] cluster as a cofactor.

The catalysed reaction is (S)-malate = fumarate + H2O. It catalyses the reaction oxaloacetate = enol-oxaloacetate. It participates in carbohydrate metabolism; tricarboxylic acid cycle; (S)-malate from fumarate: step 1/1. Functionally, catalyzes the reversible hydration of fumarate to (S)-malate. Functions as an aerobic enzyme in the direction of malate formation as part of the citric acid cycle. Accounts for about 80% of the fumarase activity when the bacteria grow aerobically. To a lesser extent, also displays D-tartrate dehydratase activity in vitro, but is not able to convert (R)-malate, L-tartrate or meso-tartrate. Can also catalyze the isomerization of enol- to keto-oxaloacetate. In Escherichia coli O6:H1 (strain CFT073 / ATCC 700928 / UPEC), this protein is Fumarate hydratase class I, aerobic.